The chain runs to 115 residues: T cell receptor beta variable 16 (115 aa).

Residues 1 to 20 (MSPIFTCITILCLLAAGSPG) form the signal peptide. Residues 21 to 115 (EEVAQTPKHL…SAVYFCASSQ (95 aa)) enclose the Ig-like domain. Cysteine 42 and cysteine 111 are joined by a disulfide.

Alpha-beta TR is a heterodimer composed of an alpha and beta chain; disulfide-linked. The alpha-beta TR is associated with the transmembrane signaling CD3 coreceptor proteins to form the TR-CD3 (TcR or TCR). The assembly of alpha-beta TR heterodimers with CD3 occurs in the endoplasmic reticulum where a single alpha-beta TR heterodimer associates with one CD3D-CD3E heterodimer, one CD3G-CD3E heterodimer and one CD247 homodimer forming a stable octameric structure. CD3D-CD3E and CD3G-CD3E heterodimers preferentially associate with TR alpha and TR beta chains, respectively. The association of the CD247 homodimer is the last step of TcR assembly in the endoplasmic reticulum and is required for transport to the cell surface.

It is found in the cell membrane. Functionally, v region of the variable domain of T cell receptor (TR) beta chain that participates in the antigen recognition. Alpha-beta T cell receptors are antigen specific receptors which are essential to the immune response and are present on the cell surface of T lymphocytes. Recognize peptide-major histocompatibility (MH) (pMH) complexes that are displayed by antigen presenting cells (APC), a prerequisite for efficient T cell adaptive immunity against pathogens. Binding of alpha-beta TR to pMH complex initiates TR-CD3 clustering on the cell surface and intracellular activation of LCK that phosphorylates the ITAM motifs of CD3G, CD3D, CD3E and CD247 enabling the recruitment of ZAP70. In turn ZAP70 phosphorylates LAT, which recruits numerous signaling molecules to form the LAT signalosome. The LAT signalosome propagates signal branching to three major signaling pathways, the calcium, the mitogen-activated protein kinase (MAPK) kinase and the nuclear factor NF-kappa-B (NF-kB) pathways, leading to the mobilization of transcription factors that are critical for gene expression and essential for T cell growth and differentiation. The T cell repertoire is generated in the thymus, by V-(D)-J rearrangement. This repertoire is then shaped by intrathymic selection events to generate a peripheral T cell pool of self-MH restricted, non-autoaggressive T cells. Post-thymic interaction of alpha-beta TR with the pMH complexes shapes TR structural and functional avidity. This is T cell receptor beta variable 16 from Homo sapiens (Human).